The sequence spans 1404 residues: ABC transporter G family member 47 (1404 aa).

The region spanning glycine 156 to glutamate 423 is the ABC transporter 1 domain. Glycine 189–threonine 196 provides a ligand contact to ATP. Residues glutamate 501–phenylalanine 714 enclose the ABC transmembrane type-2 1 domain. The next 7 membrane-spanning stretches (helical) occupy residues phenylalanine 519 to phenylalanine 539, methionine 565 to phenylalanine 585, threonine 607 to phenylalanine 627, phenylalanine 638 to leucine 658, valine 663 to isoleucine 683, tryptophan 692 to asparagine 712, and valine 751 to phenylalanine 771. The ABC transporter 2 domain maps to isoleucine 808–glutamate 1059. Glycine 852–threonine 859 is a binding site for ATP. Positions threonine 1132–phenylalanine 1346 constitute an ABC transmembrane type-2 2 domain. 7 helical membrane passes run isoleucine 1152–glycine 1172, leucine 1183–valine 1199, leucine 1239–tyrosine 1259, phenylalanine 1266–methionine 1286, threonine 1298–leucine 1318, isoleucine 1321–leucine 1341, and leucine 1373–glycine 1393.

It belongs to the ABC transporter superfamily. ABCG family. PDR (TC 3.A.1.205) subfamily.

It localises to the membrane. In terms of biological role, may be a general defense protein. This chain is ABC transporter G family member 47, found in Oryza sativa subsp. japonica (Rice).